Here is a 571-residue protein sequence, read N- to C-terminus: Proline--tRNA ligase (571 aa).

It belongs to the class-II aminoacyl-tRNA synthetase family. ProS type 1 subfamily. Homodimer.

It localises to the cytoplasm. It catalyses the reaction tRNA(Pro) + L-proline + ATP = L-prolyl-tRNA(Pro) + AMP + diphosphate. Catalyzes the attachment of proline to tRNA(Pro) in a two-step reaction: proline is first activated by ATP to form Pro-AMP and then transferred to the acceptor end of tRNA(Pro). As ProRS can inadvertently accommodate and process non-cognate amino acids such as alanine and cysteine, to avoid such errors it has two additional distinct editing activities against alanine. One activity is designated as 'pretransfer' editing and involves the tRNA(Pro)-independent hydrolysis of activated Ala-AMP. The other activity is designated 'posttransfer' editing and involves deacylation of mischarged Ala-tRNA(Pro). The misacylated Cys-tRNA(Pro) is not edited by ProRS. The protein is Proline--tRNA ligase of Pseudomonas putida (strain GB-1).